The following is a 428-amino-acid chain: Enolase (428 aa).

Q173 provides a ligand contact to (2R)-2-phosphoglycerate. The Proton donor role is filled by E217. Residues D253, E294, and D320 each coordinate Mg(2+). Positions 345, 374, 375, and 396 each coordinate (2R)-2-phosphoglycerate. K345 functions as the Proton acceptor in the catalytic mechanism.

It belongs to the enolase family. Mg(2+) serves as cofactor.

It is found in the cytoplasm. The protein resides in the secreted. Its subcellular location is the cell surface. The catalysed reaction is (2R)-2-phosphoglycerate = phosphoenolpyruvate + H2O. It participates in carbohydrate degradation; glycolysis; pyruvate from D-glyceraldehyde 3-phosphate: step 4/5. Its function is as follows. Catalyzes the reversible conversion of 2-phosphoglycerate (2-PG) into phosphoenolpyruvate (PEP). It is essential for the degradation of carbohydrates via glycolysis. The polypeptide is Enolase (Methanosarcina mazei (strain ATCC BAA-159 / DSM 3647 / Goe1 / Go1 / JCM 11833 / OCM 88) (Methanosarcina frisia)).